A 521-amino-acid chain; its full sequence is Occludin (521 aa).

Residues 1–66 (MSSRPFESPP…KWTSPPGVIR (66 aa)) are Cytoplasmic-facing. Residues 60–268 (SPPGVIRILS…IIFFAVKTRR (209 aa)) enclose the MARVEL domain. Residues 67–89 (ILSMLVIVMCIAIFGCVASTLAW) traverse the membrane as a helical segment. Over 90-134 (DRGYGTGLMGGSIGYPYGSGFGSYGTGYGYGFGYGYGYGGYTDPR) the chain is Extracellular. A helical transmembrane segment spans residues 135–159 (AAKGFLLAMVAFCFIAALVIFVTSV). Over 160-169 (IRSDISRTRR) the chain is Cytoplasmic. A helical membrane pass occupies residues 170-194 (YYLTVIILSAFLGVMMFIATIVYIM). Over 195–242 (GVNPTAQASGSLYSSQIYAMCNQFYASTATGLYMDQYLYHYCVVDPQE) the chain is Extracellular. The cysteines at positions 215 and 236 are disulfide-linked. Residues 243–264 (AIAIVLGFMVIVAFALIIFFAV) traverse the membrane as a helical segment. The Cytoplasmic segment spans residues 265–521 (KTRRKMDRYD…MVGDYDRQKT (257 aa)). A Phosphoserine modification is found at Ser301. Residues 301–407 (SAGTQDMPPP…ETDYTTGGES (107 aa)) form a disordered region. Thr304 carries the phosphothreonine modification. Phosphoserine occurs at positions 312, 320, and 339. A Phosphotyrosine modification is found at Tyr367. Residues Ser368 and Ser369 each carry the phosphoserine modification. Over residues 380-389 (APSKGRTGRP) the composition is skewed to basic residues. Basic and acidic residues predominate over residues 390 to 399 (KRLEQDHYET). Residues Tyr397 and Tyr401 each carry the phosphotyrosine modification. Phosphothreonine; by PKC/PRKCH occurs at positions 402 and 403. Ser407 carries the phosphoserine modification. The region spanning 413-521 (EDWIREYPPI…MVGDYDRQKT (109 aa)) is the OCEL domain. Positions 424–488 (SDQQRQLYKR…EYNRLKQVKG (65 aa)) form a coiled coil. The residue at position 489 (Ser489) is a Phosphoserine.

The protein belongs to the ELL/occludin family. In terms of assembly, interacts with TJP1/ZO1. Interacts with VAPA. Interacts with CLDN1, CLDN6, CLDN9, CLDN11, CLDN12 and CLDN17. Interacts with PLSCR1. Interacts with LSR, ILDR1 and ILDR2. Interacts with TJP2/ZO2. Dephosphorylated by PTPRJ. Less-phosphorylated forms are found in basolateral membrane, cytosol and tight junction. More-heavily phosphorylated forms are concentrated exclusively in tight junction. As to expression, localized at tight junctions of both epithelial and endothelial cells.

Its subcellular location is the cell membrane. The protein resides in the cell junction. It localises to the tight junction. May play a role in the formation and regulation of the tight junction (TJ) paracellular permeability barrier. Interacts with ZO-1. This chain is Occludin (OCLN), found in Canis lupus familiaris (Dog).